Here is a 445-residue protein sequence, read N- to C-terminus: Protein PRRC1 (445 aa).

2 disordered regions span residues 1 to 71 (MMEE…PSAP) and 105 to 167 (PPVS…TGLL). A compositionally biased stretch (polar residues) spans 27–49 (MSSTPVPLAATSSFSSPNVSSME). The segment covering 59–71 (PQPPLPPVRPSAP) has biased composition (pro residues). A phosphoserine mark is found at serine 209 and serine 408.

This sequence belongs to the PRRC1 family. In terms of assembly, interacts with PRKAR1A; resulting in PKA activation. In terms of tissue distribution, ubiquitously expressed with higher expression in kidney, liver and placenta. Detected in embryonic kidney cells (HEK293 cells) (at protein level). As to expression, specifically expressed in liver.

The protein resides in the golgi apparatus. It is found in the cytoplasm. Functionally, may act as a regulator of the protein kinase A (PKA) activity during embryonic development. The chain is Protein PRRC1 (PRRC1) from Homo sapiens (Human).